The following is a 572-amino-acid chain: Methionine--tRNA ligase (572 aa).

The 'HIGH' region motif lies at 11 to 21 (PYINGIKHLGN). Residues cysteine 143, cysteine 146, cysteine 156, and cysteine 159 each coordinate Zn(2+). The short motif at 346–350 (QFSTS) is the 'KMSKS' region element. Threonine 349 contacts ATP.

This sequence belongs to the class-I aminoacyl-tRNA synthetase family. MetG type 1 subfamily. As to quaternary structure, monomer. Requires Zn(2+) as cofactor.

It is found in the cytoplasm. The enzyme catalyses tRNA(Met) + L-methionine + ATP = L-methionyl-tRNA(Met) + AMP + diphosphate. Functionally, is required not only for elongation of protein synthesis but also for the initiation of all mRNA translation through initiator tRNA(fMet) aminoacylation. The polypeptide is Methionine--tRNA ligase (Cereibacter sphaeroides (strain ATCC 17025 / ATH 2.4.3) (Rhodobacter sphaeroides)).